Consider the following 373-residue polypeptide: Lipoyl synthase (373 aa).

The disordered stretch occupies residues 14–36 (VSNDHPSSSPLQPGVKQSGEDKI). Cys81, Cys86, Cys92, Cys107, Cys111, Cys114, and Ser323 together coordinate [4Fe-4S] cluster. The Radical SAM core domain occupies 93–312 (FSHGTATFMI…EEYGMALGFS (220 aa)). Residues 346-373 (PAVSSTEHRERNTIASKSASKTESIHHR) are disordered. The span at 358–367 (TIASKSASKT) shows a compositional bias: polar residues.

It belongs to the radical SAM superfamily. Lipoyl synthase family. [4Fe-4S] cluster serves as cofactor.

It localises to the cytoplasm. It carries out the reaction [[Fe-S] cluster scaffold protein carrying a second [4Fe-4S](2+) cluster] + N(6)-octanoyl-L-lysyl-[protein] + 2 oxidized [2Fe-2S]-[ferredoxin] + 2 S-adenosyl-L-methionine + 4 H(+) = [[Fe-S] cluster scaffold protein] + N(6)-[(R)-dihydrolipoyl]-L-lysyl-[protein] + 4 Fe(3+) + 2 hydrogen sulfide + 2 5'-deoxyadenosine + 2 L-methionine + 2 reduced [2Fe-2S]-[ferredoxin]. Its pathway is protein modification; protein lipoylation via endogenous pathway; protein N(6)-(lipoyl)lysine from octanoyl-[acyl-carrier-protein]: step 2/2. Functionally, catalyzes the radical-mediated insertion of two sulfur atoms into the C-6 and C-8 positions of the octanoyl moiety bound to the lipoyl domains of lipoate-dependent enzymes, thereby converting the octanoylated domains into lipoylated derivatives. The chain is Lipoyl synthase from Xylella fastidiosa (strain M23).